Here is a 186-residue protein sequence, read N- to C-terminus: Elongation factor P (186 aa).

It belongs to the elongation factor P family.

Its subcellular location is the cytoplasm. The protein operates within protein biosynthesis; polypeptide chain elongation. Functionally, involved in peptide bond synthesis. Stimulates efficient translation and peptide-bond synthesis on native or reconstituted 70S ribosomes in vitro. Probably functions indirectly by altering the affinity of the ribosome for aminoacyl-tRNA, thus increasing their reactivity as acceptors for peptidyl transferase. In Pelagibacter ubique (strain HTCC1062), this protein is Elongation factor P.